A 502-amino-acid chain; its full sequence is Cytochrome P450 81D1 (502 aa).

The chain crosses the membrane as a helical span at residues 6–26 (IRVVLYSIFSLIFLIISFKFL). C440 is a binding site for heme.

It belongs to the cytochrome P450 family. The cofactor is heme.

The protein localises to the membrane. This Arabidopsis thaliana (Mouse-ear cress) protein is Cytochrome P450 81D1 (CYP81D1).